We begin with the raw amino-acid sequence, 151 residues long: Putative pre-16S rRNA nuclease (151 aa).

It belongs to the YqgF nuclease family.

Its subcellular location is the cytoplasm. Its function is as follows. Could be a nuclease involved in processing of the 5'-end of pre-16S rRNA. This Prochlorococcus marinus subsp. pastoris (strain CCMP1986 / NIES-2087 / MED4) protein is Putative pre-16S rRNA nuclease.